The sequence spans 734 residues: Transcriptional regulator AacuB (734 aa).

The zn(2)-C6 fungal-type DNA-binding region spans 26 to 52; it reads CVLCQQRKIKCDRTFPCTNCVRAHVQC. Residues 86–107 show a composition bias toward basic and acidic residues; the sequence is FDPLHTPTADHRSASDDGRDDL. The disordered stretch occupies residues 86–122; sequence FDPLHTPTADHRSASDDGRDDLPEGAESEGTFGEREK.

The protein localises to the nucleus. Its function is as follows. Transcriptional regulator; part of the gene cluster that mediates the biosynthesis of the tetrahydroxanthone dimer secalonic acid D. In Aspergillus aculeatus (strain ATCC 16872 / CBS 172.66 / WB 5094), this protein is Transcriptional regulator AacuB.